Reading from the N-terminus, the 165-residue chain is Ribosome maturation factor RimM (165 aa).

A PRC barrel domain is found at 94 to 165; the sequence is EDEFYIADLN…YGILNYKREV (72 aa).

It belongs to the RimM family. In terms of assembly, binds ribosomal protein uS19.

It is found in the cytoplasm. Functionally, an accessory protein needed during the final step in the assembly of 30S ribosomal subunit, possibly for assembly of the head region. Essential for efficient processing of 16S rRNA. May be needed both before and after RbfA during the maturation of 16S rRNA. It has affinity for free ribosomal 30S subunits but not for 70S ribosomes. The chain is Ribosome maturation factor RimM from Rickettsia canadensis (strain McKiel).